A 511-amino-acid polypeptide reads, in one-letter code: Cytochrome P450 monooxyhenase eriC (511 aa).

A helical membrane pass occupies residues 2–22 (VLADFISIPTVSIACLAVLGI). A heme-binding site is contributed by C445.

It belongs to the cytochrome P450 family. It depends on heme as a cofactor.

It localises to the membrane. The enzyme catalyses erinacol + reduced [NADPH--hemoprotein reductase] + O2 = cyathadiol + oxidized [NADPH--hemoprotein reductase] + H2O + H(+). Its pathway is secondary metabolite biosynthesis. Its function is as follows. Cytochrome P450 monooxygenase; part of the gene cluster that mediates the biosynthesis of erinacines, cyathane-xylosides that show unique biological activities, including leishmanicidal activity, stimulating activity for nerve growth-factor synthesis, and agonistic activity toward the kappa opioid receptor. Within the pathway, eriC hydroxylates erinacol at C-15 of the seven-membered ring to yield cyathadiol. The first step of the erinacines biosynthesis pathway is catalyzed by the geranylgeranyl diphosphate (GGPP) synthase eriE via conversion of farnesyl pyrophosphate and isopentyl pyrophosphate into geranylgeranyl pyrophosphate (GGPP). GGPP is then substrate of the diterpene cyclase eriG for the production of cyatha-3,12-diene. The cytochrome P450 monooxygenase eriI then hydroxylates cyatha-3,12-diene at C-14 of the seven-membered ring to produce erinacol, which is further hydroxylated at C-15 by the cytochrome P450 monooxygenase eriC to yield cyathadiol. The cytochrome P450 monooxygenase eriA then catalyzes C-11 hydroxylation in the presence of the short chain dehydrogenase/reductase (SDR) eriH, which leads to the production of cyathatriol. The acetyltransferase eriL converts cyathatriol into 11-O-acetyl-cyathatriol. The SDR eriH catalyzes further oxidation of 11-O-acetyl-cyathatriol into 1-O-acetylcyathin A3. Finally, the glycosyl transferase eriJ tranfers xylose from UDP-xylose onto C-14 of 11-O-acetyl-cyathatriol to form eracine Q. EriJ is also able to convert 11-O-acetyl-cyathatriol to eracine Q2 by using UDP-D-glucose as cosubstrate, but at a lower rate. The polypeptide is Cytochrome P450 monooxyhenase eriC (Hericium erinaceus (Lion's mane mushroom)).